The chain runs to 379 residues: Cytochrome b (379 aa).

4 helical membrane passes run 33-53 (FGSLLGACLTIQIITGLFLAM), 77-98 (WTIRYLHANGASVFFLCLFIHV), 113-133 (WNVGIILLFSVMATAFMGYVL), and 178-198 (FFALHFVLPFVILALVMIHLL). Positions 83 and 97 each coordinate heme b. Heme b-binding residues include histidine 182 and histidine 196. Position 201 (histidine 201) interacts with a ubiquinone. 4 helical membrane passes run 226 to 246 (TKDFLGLLLLILLLMVLTLFY), 288 to 308 (LGGVMALILSILILAIIPLLQ), 320 to 340 (LSQFLFWILVADLLTLTWIGG), and 347 to 367 (FITIGQVASILYFLLMVLIMP).

It belongs to the cytochrome b family. In terms of assembly, the cytochrome bc1 complex contains 11 subunits: 3 respiratory subunits (MT-CYB, CYC1 and UQCRFS1), 2 core proteins (UQCRC1 and UQCRC2) and 6 low-molecular weight proteins (UQCRH/QCR6, UQCRB/QCR7, UQCRQ/QCR8, UQCR10/QCR9, UQCR11/QCR10 and a cleavage product of UQCRFS1). This cytochrome bc1 complex then forms a dimer. It depends on heme b as a cofactor.

Its subcellular location is the mitochondrion inner membrane. Component of the ubiquinol-cytochrome c reductase complex (complex III or cytochrome b-c1 complex) that is part of the mitochondrial respiratory chain. The b-c1 complex mediates electron transfer from ubiquinol to cytochrome c. Contributes to the generation of a proton gradient across the mitochondrial membrane that is then used for ATP synthesis. The protein is Cytochrome b (MT-CYB) of Lepilemur edwardsi (Milne-Edwards's sportive lemur).